The following is a 308-amino-acid chain: tRNA pseudouridine synthase B (308 aa).

Asp47 serves as the catalytic Nucleophile.

The protein belongs to the pseudouridine synthase TruB family. Type 1 subfamily.

The catalysed reaction is uridine(55) in tRNA = pseudouridine(55) in tRNA. Functionally, responsible for synthesis of pseudouridine from uracil-55 in the psi GC loop of transfer RNAs. The sequence is that of tRNA pseudouridine synthase B from Xanthomonas oryzae pv. oryzae (strain MAFF 311018).